Here is a 212-residue protein sequence, read N- to C-terminus: MERSDQPPDVVIRRLPLYARSLRYLLEEGIHSVSSQELGERINVTAAQIRKDLSYFGEFGKQGIGYDVEKLLHHIERILGLNQHWPVVLVGIGLLGQAIARYEGFRSEGIEIVALFDSDPAKIGQRVGDLVIQDFANVRRVVAEKQVKLAIIAVPALQAQRVADVLIEAGVRAILSYAPMILQVPEDVWVRYIDPVAVLQSMTYYLAREQQH.

The H-T-H motif DNA-binding region spans 17–56 (LYARSLRYLLEEGIHSVSSQELGERINVTAAQIRKDLSYF). An NAD(+)-binding site is contributed by 91–96 (GIGLLG).

It belongs to the transcriptional regulatory Rex family. In terms of assembly, homodimer.

Its subcellular location is the cytoplasm. Functionally, modulates transcription in response to changes in cellular NADH/NAD(+) redox state. In Chloroflexus aggregans (strain MD-66 / DSM 9485), this protein is Redox-sensing transcriptional repressor Rex.